The sequence spans 1405 residues: DNA-directed RNA polymerase III subunit rpc1 (1405 aa).

The Zn(2+) site is built by Cys-66, Cys-69, Cys-76, His-79, Cys-106, Cys-109, and Cys-153. Asp-493, Asp-495, and Asp-497 together coordinate Mg(2+). The tract at residues 838–850 (PTEFLFHAISGRE) is bridging helix.

The protein belongs to the RNA polymerase beta' chain family. Component of the RNA polymerase III (Pol III) complex consisting of 17 subunits.

It is found in the nucleus. The enzyme catalyses RNA(n) + a ribonucleoside 5'-triphosphate = RNA(n+1) + diphosphate. In terms of biological role, DNA-dependent RNA polymerase catalyzes the transcription of DNA into RNA using the four ribonucleoside triphosphates as substrates. Largest and catalytic core component of RNA polymerase III which synthesizes small RNAs, such as 5S rRNA and tRNAs. Forms the polymerase active center together with the second largest subunit. A single-stranded DNA template strand of the promoter is positioned within the central active site cleft of Pol III. A bridging helix emanates from RPC1 and crosses the cleft near the catalytic site and is thought to promote translocation of Pol III by acting as a ratchet that moves the RNA-DNA hybrid through the active site by switching from straight to bent conformations at each step of nucleotide addition. The sequence is that of DNA-directed RNA polymerase III subunit rpc1 (rpc1) from Schizosaccharomyces pombe (strain 972 / ATCC 24843) (Fission yeast).